The sequence spans 150 residues: UPF0178 protein Bpet3884 (150 aa).

It belongs to the UPF0178 family.

The polypeptide is UPF0178 protein Bpet3884 (Bordetella petrii (strain ATCC BAA-461 / DSM 12804 / CCUG 43448)).